The following is a 376-amino-acid chain: Probable allantoicase (376 aa).

This sequence belongs to the allantoicase family.

It carries out the reaction allantoate + H2O = (S)-ureidoglycolate + urea. It participates in nitrogen metabolism; (S)-allantoin degradation; (S)-ureidoglycolate from allantoate (aminidohydrolase route): step 1/1. This chain is Probable allantoicase, found in Streptomyces coelicolor (strain ATCC BAA-471 / A3(2) / M145).